Here is a 73-residue protein sequence, read N- to C-terminus: MKVAEEYDKGVPMMLAPQMGAIDATVESIRYRAQLIARNQKLDSGVAATGMIGFAAGFLFSLLMVIVLPLLFW.

A helical transmembrane segment spans residues 52–72 (IGFAAGFLFSLLMVIVLPLLF).

Belongs to the MtrF family. The complex is composed of 8 subunits; MtrA, MtrB, MtrC, MtrD, MtrE, MtrF, MtrG and MtrH.

It localises to the cell membrane. The enzyme catalyses 5-methyl-5,6,7,8-tetrahydromethanopterin + coenzyme M + 2 Na(+)(in) = 5,6,7,8-tetrahydromethanopterin + methyl-coenzyme M + 2 Na(+)(out). It functions in the pathway one-carbon metabolism; methanogenesis from CO(2); methyl-coenzyme M from 5,10-methylene-5,6,7,8-tetrahydromethanopterin: step 2/2. Part of a complex that catalyzes the formation of methyl-coenzyme M and tetrahydromethanopterin from coenzyme M and methyl-tetrahydromethanopterin. This is an energy-conserving, sodium-ion translocating step. The sequence is that of Tetrahydromethanopterin S-methyltransferase subunit F from Methanosarcina barkeri (strain Fusaro / DSM 804).